We begin with the raw amino-acid sequence, 149 residues long: MEVILLDKIAHLGDLGDKVVVKSGFARNYLFPQGKAVMATKDNLAAFEARRAELEAKLADVLAAAEARAAQLSALTNVTIATKAGDEGKLFGSVGTRDIADAITAAGVPVAKSEVRMPNGVLRSVGEYDIVVHLHTDVNTTVKVTVVAE.

It belongs to the bacterial ribosomal protein bL9 family.

Binds to the 23S rRNA. This Tolumonas auensis (strain DSM 9187 / NBRC 110442 / TA 4) protein is Large ribosomal subunit protein bL9.